We begin with the raw amino-acid sequence, 156 residues long: MPRKGHIAKREVAPDPVYGSTLVTKFVNSMMWGGKKSTAQGIFYSAMTNLEQKGGDEAIKLFKKAVENCKPLLEVKTRRVGGANYQVPVEVNPERRTSLAIRWLVSYGRARGEKGMIEKLTNELLDAANGRGAAMKKKEDVHRMAEANKAFAHYRW.

This sequence belongs to the universal ribosomal protein uS7 family. Part of the 30S ribosomal subunit. Contacts proteins S9 and S11.

One of the primary rRNA binding proteins, it binds directly to 16S rRNA where it nucleates assembly of the head domain of the 30S subunit. Is located at the subunit interface close to the decoding center, probably blocks exit of the E-site tRNA. The polypeptide is Small ribosomal subunit protein uS7 (Acidobacterium capsulatum (strain ATCC 51196 / DSM 11244 / BCRC 80197 / JCM 7670 / NBRC 15755 / NCIMB 13165 / 161)).